The chain runs to 351 residues: Transaldolase (351 aa).

The active-site Schiff-base intermediate with substrate is Lys138.

It belongs to the transaldolase family. Type 2 subfamily.

The protein localises to the cytoplasm. It carries out the reaction D-sedoheptulose 7-phosphate + D-glyceraldehyde 3-phosphate = D-erythrose 4-phosphate + beta-D-fructose 6-phosphate. Its pathway is carbohydrate degradation; pentose phosphate pathway; D-glyceraldehyde 3-phosphate and beta-D-fructose 6-phosphate from D-ribose 5-phosphate and D-xylulose 5-phosphate (non-oxidative stage): step 2/3. Transaldolase is important for the balance of metabolites in the pentose-phosphate pathway. The polypeptide is Transaldolase (Neisseria meningitidis serogroup C / serotype 2a (strain ATCC 700532 / DSM 15464 / FAM18)).